The sequence spans 438 residues: GTPase Obg (438 aa).

In terms of domain architecture, Obg spans 2–160; that stretch reads NMFVDQIKIE…HYLELELKML (159 aa). The 177-residue stretch at 161–337 folds into the OBG-type G domain; it reads ADVGLIGFPS…LMQLTADLLD (177 aa). GTP is bound by residues 167 to 174, 192 to 196, 214 to 217, 284 to 287, and 318 to 320; these read GFPSVGKS, FTTLT, DMPG, TKMD, and SAV. Mg(2+) is bound by residues S174 and T194. In terms of domain architecture, OCT spans 360–438; that stretch reads PDKKDEADFT…IEKFVFEFIQ (79 aa).

The protein belongs to the TRAFAC class OBG-HflX-like GTPase superfamily. OBG GTPase family. In terms of assembly, monomer. Mg(2+) is required as a cofactor.

The protein resides in the cytoplasm. Its function is as follows. An essential GTPase which binds GTP, GDP and possibly (p)ppGpp with moderate affinity, with high nucleotide exchange rates and a fairly low GTP hydrolysis rate. Plays a role in control of the cell cycle, stress response, ribosome biogenesis and in those bacteria that undergo differentiation, in morphogenesis control. This Limosilactobacillus reuteri (strain DSM 20016) (Lactobacillus reuteri) protein is GTPase Obg.